We begin with the raw amino-acid sequence, 227 residues long: ATP-dependent Clp protease proteolytic subunit (227 aa).

Serine 120 serves as the catalytic Nucleophile. Residue histidine 145 is part of the active site.

This sequence belongs to the peptidase S14 family. As to quaternary structure, fourteen ClpP subunits assemble into 2 heptameric rings which stack back to back to give a disk-like structure with a central cavity, resembling the structure of eukaryotic proteasomes.

The protein localises to the cytoplasm. The enzyme catalyses Hydrolysis of proteins to small peptides in the presence of ATP and magnesium. alpha-casein is the usual test substrate. In the absence of ATP, only oligopeptides shorter than five residues are hydrolyzed (such as succinyl-Leu-Tyr-|-NHMec, and Leu-Tyr-Leu-|-Tyr-Trp, in which cleavage of the -Tyr-|-Leu- and -Tyr-|-Trp bonds also occurs).. Functionally, cleaves peptides in various proteins in a process that requires ATP hydrolysis. Has a chymotrypsin-like activity. Plays a major role in the degradation of misfolded proteins. The sequence is that of ATP-dependent Clp protease proteolytic subunit from Rickettsia bellii (strain RML369-C).